Here is a 419-residue protein sequence, read N- to C-terminus: Glucose-1-phosphate adenylyltransferase (419 aa).

Residues Tyr107, Gly172, 187-188 (EK), and Ser205 contribute to the alpha-D-glucose 1-phosphate site.

It belongs to the bacterial/plant glucose-1-phosphate adenylyltransferase family. As to quaternary structure, homotetramer.

It catalyses the reaction alpha-D-glucose 1-phosphate + ATP + H(+) = ADP-alpha-D-glucose + diphosphate. It participates in glycan biosynthesis; glycogen biosynthesis. In terms of biological role, involved in the biosynthesis of ADP-glucose, a building block required for the elongation reactions to produce glycogen. Catalyzes the reaction between ATP and alpha-D-glucose 1-phosphate (G1P) to produce pyrophosphate and ADP-Glc. This is Glucose-1-phosphate adenylyltransferase from Novosphingobium aromaticivorans (strain ATCC 700278 / DSM 12444 / CCUG 56034 / CIP 105152 / NBRC 16084 / F199).